Here is a 272-residue protein sequence, read N- to C-terminus: Ribosomal RNA small subunit methyltransferase A (272 aa).

The S-adenosyl-L-methionine site is built by Asn20, Leu22, Gly47, Glu68, Asp93, and Asn114.

It belongs to the class I-like SAM-binding methyltransferase superfamily. rRNA adenine N(6)-methyltransferase family. RsmA subfamily.

The protein localises to the cytoplasm. It carries out the reaction adenosine(1518)/adenosine(1519) in 16S rRNA + 4 S-adenosyl-L-methionine = N(6)-dimethyladenosine(1518)/N(6)-dimethyladenosine(1519) in 16S rRNA + 4 S-adenosyl-L-homocysteine + 4 H(+). In terms of biological role, specifically dimethylates two adjacent adenosines (A1518 and A1519) in the loop of a conserved hairpin near the 3'-end of 16S rRNA in the 30S particle. May play a critical role in biogenesis of 30S subunits. The polypeptide is Ribosomal RNA small subunit methyltransferase A (Aliivibrio fischeri (strain ATCC 700601 / ES114) (Vibrio fischeri)).